Reading from the N-terminus, the 189-residue chain is Cyclin-dependent kinase inhibitor 5 (189 aa).

Residues 73–93 are compositionally biased toward polar residues; that stretch reads KQQKQQLIPSVNQCQTKNPRA. The interval 73 to 107 is disordered; it reads KQQKQQLIPSVNQCQTKNPRASSGPAKKLEPDTTT.

It belongs to the CDI family. ICK/KRP subfamily. As to quaternary structure, interacts with CYCD4-1. Does not interact with CDKA-1. Expressed in flowers and at lower levels in roots and leaves.

The protein resides in the nucleus. Its subcellular location is the nucleoplasm. Functionally, inhibits CYCD2-1/CDKA-1 complex kinase activity without interaction with the complex. The polypeptide is Cyclin-dependent kinase inhibitor 5 (KRP5) (Arabidopsis thaliana (Mouse-ear cress)).